Here is a 112-residue protein sequence, read N- to C-terminus: Large ribosomal subunit protein uL22 (112 aa).

The protein belongs to the universal ribosomal protein uL22 family. Part of the 50S ribosomal subunit.

Its function is as follows. This protein binds specifically to 23S rRNA; its binding is stimulated by other ribosomal proteins, e.g. L4, L17, and L20. It is important during the early stages of 50S assembly. It makes multiple contacts with different domains of the 23S rRNA in the assembled 50S subunit and ribosome. Functionally, the globular domain of the protein is located near the polypeptide exit tunnel on the outside of the subunit, while an extended beta-hairpin is found that lines the wall of the exit tunnel in the center of the 70S ribosome. The polypeptide is Large ribosomal subunit protein uL22 (Legionella pneumophila subsp. pneumophila (strain Philadelphia 1 / ATCC 33152 / DSM 7513)).